A 1393-amino-acid chain; its full sequence is RNA polymerase II-associated protein 1 (1393 aa).

Disordered regions lie at residues Lys-34–His-53, Asn-61–Arg-94, and Ser-266–Leu-295. A compositionally biased stretch (pro residues) spans Asp-64 to Pro-74. Position 72 is a phosphoserine (Ser-72). Residue Thr-321 is modified to Phosphothreonine. Positions Pro-496 to Ala-531 are disordered. Acidic residues predominate over residues Asp-500–Cys-510. Residues Lys-518–Ala-531 show a composition bias toward basic and acidic residues. A Phosphoserine modification is found at Ser-1121.

This sequence belongs to the RPAP1 family. Part of an RNA polymerase II complex that contains POLR2A, POLR2B, POLR2C, POLR2D, POLR2E, POLR2F, POLR2G, POLR2H, POLR2I, POLR2J, POLR2K, POLR2L, RPAP1, FCP1 plus the general transcription factors TFIIB and TFIIF.

It localises to the nucleus. Functionally, forms an interface between the RNA polymerase II enzyme and chaperone/scaffolding protein, suggesting that it is required to connect RNA polymerase II to regulators of protein complex formation. Required for interaction of the RNA polymerase II complex with acetylated histone H3. The polypeptide is RNA polymerase II-associated protein 1 (RPAP1) (Homo sapiens (Human)).